We begin with the raw amino-acid sequence, 299 residues long: Pyridoxal 5'-phosphate synthase subunit PdxS (299 aa).

Asp24 provides a ligand contact to D-ribose 5-phosphate. Lys81 acts as the Schiff-base intermediate with D-ribose 5-phosphate in catalysis. A D-ribose 5-phosphate-binding site is contributed by Gly153. Arg165 is a D-glyceraldehyde 3-phosphate binding site. D-ribose 5-phosphate is bound by residues Gly219 and Gly240–Ser241.

Belongs to the PdxS/SNZ family. In terms of assembly, in the presence of PdxT, forms a dodecamer of heterodimers.

The enzyme catalyses aldehydo-D-ribose 5-phosphate + D-glyceraldehyde 3-phosphate + L-glutamine = pyridoxal 5'-phosphate + L-glutamate + phosphate + 3 H2O + H(+). The protein operates within cofactor biosynthesis; pyridoxal 5'-phosphate biosynthesis. Catalyzes the formation of pyridoxal 5'-phosphate from ribose 5-phosphate (RBP), glyceraldehyde 3-phosphate (G3P) and ammonia. The ammonia is provided by the PdxT subunit. Can also use ribulose 5-phosphate and dihydroxyacetone phosphate as substrates, resulting from enzyme-catalyzed isomerization of RBP and G3P, respectively. The polypeptide is Pyridoxal 5'-phosphate synthase subunit PdxS (Methanococcus maripaludis (strain C6 / ATCC BAA-1332)).